The following is a 92-amino-acid chain: Small ribosomal subunit protein uS19c (92 aa).

Belongs to the universal ribosomal protein uS19 family.

It is found in the plastid. The protein resides in the chloroplast. Its function is as follows. Protein S19 forms a complex with S13 that binds strongly to the 16S ribosomal RNA. This Draba nemorosa (Woodland whitlowgrass) protein is Small ribosomal subunit protein uS19c.